The primary structure comprises 241 residues: 2-C-methyl-D-erythritol 4-phosphate cytidylyltransferase (241 aa).

The protein belongs to the IspD/TarI cytidylyltransferase family. IspD subfamily.

It catalyses the reaction 2-C-methyl-D-erythritol 4-phosphate + CTP + H(+) = 4-CDP-2-C-methyl-D-erythritol + diphosphate. The protein operates within isoprenoid biosynthesis; isopentenyl diphosphate biosynthesis via DXP pathway; isopentenyl diphosphate from 1-deoxy-D-xylulose 5-phosphate: step 2/6. Its function is as follows. Catalyzes the formation of 4-diphosphocytidyl-2-C-methyl-D-erythritol from CTP and 2-C-methyl-D-erythritol 4-phosphate (MEP). The protein is 2-C-methyl-D-erythritol 4-phosphate cytidylyltransferase of Shewanella denitrificans (strain OS217 / ATCC BAA-1090 / DSM 15013).